A 178-amino-acid chain; its full sequence is GTP-dependent dephospho-CoA kinase (178 aa).

GTP is bound by residues Asp43, Ile44, Val45, Asp62, Lys64, and Glu120.

This sequence belongs to the GTP-dependent DPCK family.

The enzyme catalyses 3'-dephospho-CoA + GTP = GDP + CoA + H(+). It functions in the pathway cofactor biosynthesis; coenzyme A biosynthesis. Functionally, catalyzes the GTP-dependent phosphorylation of the 3'-hydroxyl group of dephosphocoenzyme A to form coenzyme A (CoA). This Natronomonas pharaonis (strain ATCC 35678 / DSM 2160 / CIP 103997 / JCM 8858 / NBRC 14720 / NCIMB 2260 / Gabara) (Halobacterium pharaonis) protein is GTP-dependent dephospho-CoA kinase.